A 218-amino-acid chain; its full sequence is Small ribosomal subunit protein uS3c (218 aa).

In terms of domain architecture, KH type-2 spans 47-118; the sequence is VQKNMRTSSG…KLNIAVTRIA (72 aa).

The protein belongs to the universal ribosomal protein uS3 family. As to quaternary structure, part of the 30S ribosomal subunit.

It localises to the plastid. It is found in the chloroplast. This Atropa belladonna (Belladonna) protein is Small ribosomal subunit protein uS3c (rps3).